Consider the following 475-residue polypeptide: MDGTGNRNPPPTSTVGDNSPPPEPSPESLRHVSRMINSNHYTSPSRTIYSDRFIPSRSASKFALFDINTPTEGRDDSSSAYTTLLRTALFGPDVAGPVTPEKTDSPSMTLPNRNIFRYKTETRQSMHSLSPFMDDDFVPGINHSPVKAPRKVPRSPYKVLDAPALQDDFYLNLVDWSSHNVLAVGLGNCVYLWNACSSKVTKLCDLGVDDCVCSVGWAQRGTHLAVGTNNGKVQIWDAARCKKIRSMEGHRLRVGALAWSSSLLSSGGRDKNIYQRDIRTQEDFVSKLSGHKSEVCGLKWSYDNRELASGGNDNKLFVWNQHSTQPVLKYCEHTAAVKAIAWSPHLHGLLASGGGTADRCIRFWNTTTNSHLSCMDTGSQVCNLVWSKNVNELVSTHGYSQNQIIVWRYPTMSKLATLTGHTYRVLYLAISPDGQTIVTGAGDETLRFWNVFPSPKSQNTESEIGALSLGRTTIR.

The segment at 1 to 29 (MDGTGNRNPPPTSTVGDNSPPPEPSPESL) is disordered. The PEST motif motif lies at 7–28 (RNPPPTSTVGDNSPPPEPSPES). Phosphoserine occurs at positions 43 and 45. The short motif at 51–57 (DRFIPSR) is the C-box element. The CSM motif signature appears at 80-91 (AYTTLLRTALFG). Threonine 99 carries the post-translational modification Phosphothreonine. Phosphoserine is present on residues serine 144 and serine 155. WD repeat units lie at residues 166-203 (QDDF…VTKL), 207-246 (GVDD…KIRS), 249-289 (GHRL…SKLS), 290-329 (GHKS…PVLK), 332-374 (EHTA…HLSC), 376-417 (DTGS…KLAT), and 420-459 (GHTY…KSQN). The residue at position 454 (serine 454) is a Phosphoserine.

This sequence belongs to the WD repeat CDC20/Fizzy family. In terms of tissue distribution, mostly expressed in nodules, and, to a lower extent, in root tips, stems, hypocotyls, leaves, flower buds and flowers.

Its subcellular location is the nucleus. Its pathway is protein modification; protein ubiquitination. Its function is as follows. Component of the anaphase promoting complex/cyclosome (APC/C), a cell cycle-regulated E3 ubiquitin-protein ligase complex that controls progression through mitosis and the G1 phase of the cell cycle. Required to switch form cell proliferation to cell differentiation, endoreduplication and ploidy-dependent cell enlargement, including during nodulation, before nodule differentiation. Involved in root-knot nematode Meloidogyne incognita giant cells formation. This is B-type cell cycle switch protein ccs52A from Medicago truncatula (Barrel medic).